A 62-amino-acid chain; its full sequence is UPF0434 protein Rpic_2808 (62 aa).

It belongs to the UPF0434 family.

In Ralstonia pickettii (strain 12J), this protein is UPF0434 protein Rpic_2808.